A 568-amino-acid chain; its full sequence is PTS system lactose-specific EIICB component (568 aa).

The PTS EIIC type-3 domain occupies 8–409 (IEKGKPFFEK…LVDTVIYYPF (402 aa)). Helical transmembrane passes span 30-50 (GFIS…IAYV), 65-85 (MLMT…AGTT), 103-123 (INFI…AADP), 128-148 (GFLS…AAFI), 183-203 (FAFS…VIGV), 222-242 (GYLG…VGIH), 246-266 (IVEP…AHLI), 283-303 (FIVT…FMWL), 339-359 (VFFI…KFFV), and 381-401 (IVLG…LILV). Residues 465-568 (ETNVLVLCAG…LAFVEEQFKD (104 aa)) enclose the PTS EIIB type-3 domain. Cysteine 472 functions as the Phosphocysteine intermediate; for EIIB activity in the catalytic mechanism. At cysteine 472 the chain carries Phosphocysteine; by EIIA.

Its subcellular location is the cell membrane. It carries out the reaction lactose(out) + N(pros)-phospho-L-histidyl-[protein] = lactose 6-phosphate(in) + L-histidyl-[protein]. Functionally, the phosphoenolpyruvate-dependent sugar phosphotransferase system (sugar PTS), a major carbohydrate active transport system, catalyzes the phosphorylation of incoming sugar substrates concomitantly with their translocation across the cell membrane. The enzyme II LacEF PTS system is involved in lactose transport. The polypeptide is PTS system lactose-specific EIICB component (Streptococcus mutans serotype c (strain ATCC 700610 / UA159)).